The following is a 560-amino-acid chain: Solute carrier family 22 member 6 (560 aa).

The Cytoplasmic segment spans residues 1–15; the sequence is MAFSDLLEQVGSTGR. A helical membrane pass occupies residues 16–36; that stretch reads FQVLHVTLLSMPILMMASHNL. Residues 37–143 are Extracellular-facing; sequence LQNFVAAVPP…LVCDYRALKQ (107 aa). The helical transmembrane segment at 144–164 threads the bilayer; it reads MSQTTYMGGVLVGAIVFGGLS. Topologically, residues 165-170 are cytoplasmic; the sequence is DRFGRR. A helical transmembrane segment spans residues 171–191; the sequence is VLLLISNLMMAIGGTCVAFST. Residues 192–201 lie on the Extracellular side of the membrane; sequence SFTMFCVFRV. A helical transmembrane segment spans residues 202-222; that stretch reads CCGMALSGLVLNSFSLIVEWI. Topologically, residues 223-228 are cytoplasmic; it reads PTRVRT. A helical membrane pass occupies residues 229–249; sequence VVGTGTGYCYTTGQLILAAVA. The Extracellular segment spans residues 250 to 256; the sequence is YCIRDWR. Residues 257–277 form a helical membrane-spanning segment; it reads WLTLAVSLPFYVSFLYSWWFL. The Cytoplasmic portion of the chain corresponds to 278 to 345; the sequence is ESARWLVLTK…DLLRTSTMRT (68 aa). A helical transmembrane segment spans residues 346–366; that stretch reads ITICLSAVWFSTSFAYYGLSM. Topologically, residues 367-374 are extracellular; the sequence is DLQKFGVS. The chain crosses the membrane as a helical span at residues 375–395; that stretch reads IYLIQIIFGAVDIPAKIIVTI. Topologically, residues 396 to 406 are cytoplasmic; that stretch reads CMSMLGRRPSQ. The chain crosses the membrane as a helical span at residues 407-427; that stretch reads CGALVLAGIMILINLLVPSDL. Residues 428–433 are Extracellular-facing; the sequence is QMLRTS. A helical membrane pass occupies residues 434–454; that stretch reads LAVIGKGCLAASFNCCYLYAG. The Cytoplasmic portion of the chain corresponds to 455–465; the sequence is ELYPTVIRQSG. A helical transmembrane segment spans residues 466–486; that stretch reads MGWVSMMARFGAMVAPMVLLL. Topologically, residues 487 to 491 are extracellular; sequence GDDYP. The chain crosses the membrane as a helical span at residues 492–512; the sequence is WIPGFIYGGAPIVSGIFAFFL. Residues 513–560 lie on the Cytoplasmic side of the membrane; the sequence is PETLSQPLPDTIQDIDDRGLARTNSKRLPEKLDLAMKDPSCVLLKESV.

Belongs to the major facilitator (TC 2.A.1) superfamily. Organic cation transporter (TC 2.A.1.19) family. Glycosylated. Glycosylation is necessary for proper targeting of the transporter to the plasma membrane.

It localises to the cell membrane. The protein localises to the basolateral cell membrane. Its subcellular location is the basal cell membrane. Its function is as follows. Involved in the renal elimination of endogenous and exogenous organic anions. Functions as organic anion exchanger when the uptake of one molecule of organic anion is coupled with an efflux of one molecule of endogenous dicarboxylic acid (glutarate, ketoglutarate, etc). Mediates the sodium-independent uptake of p-aminohippurate (PAH), 2,3-dimercapto-1-propanesulfonic acid (DMPS), cidofovir, adefovir, 9-(2-phosphonylmethoxyethyl) guanine (PMEG), 9-(2-phosphonylmethoxyethyl) diaminopurine (PMEDAP), ochratoxin (OTA), acyclovir (ACV), 3'-azido-3-'deoxythymidine (AZT), cimetidine (CMD), 2,4-dichloro-phenoxyacetate (2,4-D), hippurate (HA), indoleacetate (IA), indoxyl sulfate (IS) and 3-carboxy-4-methyl-5-propyl-2-furanpropionate (CMPF) and edaravone sulfate. PAH uptake is inhibited by p-chloromercuribenzenesulphonate (PCMBS), diethyl pyrocarbonate (DEPC), indomethacin, sulindac, diclofenac, carprofen, okadaic acid, benzothiazolylcysteine (BTC), S-chlorotrifluoroethylcysteine (CTFC), cysteine S-conjugates S-dichlorovinylcysteine (DCVC), furosemide, steviol, phorbol 12-myristate 13-acetate (PMA), calcium ionophore A23187, benzylpenicillin, bumetamide, losartan, probenecid, phenol red, urate, glutarate and alpha-ketoglutarate. This Danio rerio (Zebrafish) protein is Solute carrier family 22 member 6 (slc22a6).